The sequence spans 235 residues: Phosphoribosylaminoimidazole-succinocarboxamide synthase (235 aa).

This sequence belongs to the SAICAR synthetase family.

It carries out the reaction 5-amino-1-(5-phospho-D-ribosyl)imidazole-4-carboxylate + L-aspartate + ATP = (2S)-2-[5-amino-1-(5-phospho-beta-D-ribosyl)imidazole-4-carboxamido]succinate + ADP + phosphate + 2 H(+). The protein operates within purine metabolism; IMP biosynthesis via de novo pathway; 5-amino-1-(5-phospho-D-ribosyl)imidazole-4-carboxamide from 5-amino-1-(5-phospho-D-ribosyl)imidazole-4-carboxylate: step 1/2. The polypeptide is Phosphoribosylaminoimidazole-succinocarboxamide synthase (Streptococcus thermophilus (strain ATCC BAA-250 / LMG 18311)).